The chain runs to 210 residues: Large ribosomal subunit protein mL57 (210 aa).

The N-terminal 59 residues, 1–59 (MLTRHCNRLGLQIENKFVFRSSSWNCVRRIGKIACNENKYRYEMTSTEEDIDSFFSRVF), are a transit peptide targeting the mitochondrion.

This sequence belongs to the ribonuclease III family. Mitochondrion-specific ribosomal protein mL57 subfamily. As to quaternary structure, component of the mitochondrial large ribosomal subunit (mt-LSU). Mature yeast 74S mitochondrial ribosomes consist of a small (37S) and a large (54S) subunit. The 37S small subunit contains a 15S ribosomal RNA (15S mt-rRNA) and at least 32 different proteins. The 54S large subunit contains a 21S rRNA (21S mt-rRNA) and at least 45 different proteins. mL57 forms a heterodimer with mL44 and stabilizes rRNA expansion segments 1/2 at a membrane-facing protuberance close to the point of attachment of the ribosome to the translocon in the membrane.

It is found in the mitochondrion. Component of the mitochondrial ribosome (mitoribosome), a dedicated translation machinery responsible for the synthesis of mitochondrial genome-encoded proteins, including at least some of the essential transmembrane subunits of the mitochondrial respiratory chain. The mitoribosomes are attached to the mitochondrial inner membrane and translation products are cotranslationally integrated into the membrane. In Schizosaccharomyces pombe (strain 972 / ATCC 24843) (Fission yeast), this protein is Large ribosomal subunit protein mL57 (mrp15).